Reading from the N-terminus, the 776-residue chain is K(+) efflux antiporter 3, chloroplastic (776 aa).

The transit peptide at 1–72 (MAISTMLGSI…KVFLDTSKRF (72 aa)) directs the protein to the chloroplast. Over 73-93 (YFQGRWSESSGRRVETYAGVD) the chain is Lumenal, thylakoid. Residues 94–114 (VASAVDVINDLGFDTLTFLMV) form a helical membrane-spanning segment. Residue threonine 115 is a topological domain, stromal. A helical transmembrane segment spans residues 116–136 (VIIVPAFRILKASPILGFFFA). At 137–153 (GVVLNQFGLIRNLTDVK) the chain is on the lumenal, thylakoid side. The helical transmembrane segment at 154 to 174 (VLSEWGILFLLFEMGLELSLA) threads the bilayer. The Stromal segment spans residues 175–181 (RLKALAK). The chain crosses the membrane as a helical span at residues 182-202 (FAFGMGLTQVLLCTAAFTAFE). Residues 203-232 (LPPNGAIGTKILEFLFHSRPDLVNIRSIDE) are Lumenal, thylakoid-facing. Residues 233–253 (AVVIGAALSLSSSAFVLQLLA) traverse the membrane as a helical segment. At 254 to 266 (EKGELPTRFGSAT) the chain is on the stromal side. The helical transmembrane segment at 267–287 (LGILLLQDIAVVPLLVILPVL) threads the bilayer. The Lumenal, thylakoid portion of the chain corresponds to 288–296 (ESQDIGGES). Residues 297–317 (IWPMLAKESAKALGGLGILSL) traverse the membrane as a helical segment. The Stromal segment spans residues 318–338 (GGKFFLRRIFEVVAETRSSEA). A helical transmembrane segment spans residues 339-359 (FVALCLLTVAGTSLVTQWLGF). Residues 360–389 (SDTLGAFLAGALLAETNFRTQIEADIRPFR) lie on the Lumenal, thylakoid side of the membrane. Residues 390 to 410 (GLLLGLFFVTTGTSIDMEVLF) form a helical membrane-spanning segment. Over 411–415 (REWPN) the chain is Stromal. The chain crosses the membrane as a helical span at residues 416 to 436 (VLSLLGGLIVIKTLIITAIGP). Residues 437–445 (RVGLTIQES) are Lumenal, thylakoid-facing. The helical transmembrane segment at 446–466 (VRVGFLLSQGGEFAFVVFSLA) threads the bilayer. Topologically, residues 467–468 (NR) are stromal. The helical transmembrane segment at 469–489 (LGVLPNELNKLLIIVVVLSMA) threads the bilayer. At 490 to 526 (LTPYLNQLGRKAADFLDERLDPGEKIGEDVNFDVSES) the chain is on the lumenal, thylakoid side. The RCK N-terminal domain occupies 524–649 (SESIVIIGFG…KKAGATDAIL (126 aa)). Residues 527 to 547 (IVIIGFGQMGQVLANFLSTPL) traverse the membrane as a helical segment. At 548-776 (VSDSDLVGWP…FVGKADKAQD (229 aa)) the chain is on the stromal side. The segment at 728–776 (MQMKASDSNSDSAAEILQETAGLSQPPEIDDSSVNIDNGFVGKADKAQD) is disordered.

Belongs to the monovalent cation:proton antiporter 2 (CPA2) transporter (TC 2.A.37) family. KEA (TC 2.A.37.1) subfamily. Expressed at low levels in flowers, siliques and leaves. As to expression, expressed at low levels in flowers and leaves. In terms of tissue distribution, most abundant splice form in all organs, including siliques, flowers, leaves and roots. Preferentially expressed in photosynthetically active tissues, including seedling cotyledons and mature leaves. Expressed in shoots and roots.

The protein localises to the plastid. Its subcellular location is the chloroplast membrane. The protein resides in the golgi apparatus membrane. It localises to the chloroplast thylakoid membrane. The enzyme catalyses K(+)(in) + H(+)(out) = K(+)(out) + H(+)(in). With respect to regulation, regulated by a mechanism involving lumenal C-terminus region; a fine-tuned balance between photoprotective energy dissipation in high light and a maximum quantum yield in low light involves a reduced activity under high light. In terms of biological role, electroneutral K(+)/H(+) efflux antiporter assuring proton efflux from the thylakoid lumen to the plastid stroma, thus increasing the membrane potential at the expense of the proton gradient (delta pH) component of the proton motive force (PMF). Promotes photosynthesis and growth in conditions where the chloroplast (cp)ATP synthase activity is low (e.g. cgl160 mutant background) by reducing the pH gradient across the thylakoid membrane. Accelerates photosynthetic acclimation in fluctuating light environments by modulating two components of the proton motive force, the proton gradient and the electric potential (delta Psi). Promotes the relaxation of photoprotective energy-dependent non-photochemical quenching (NPQ) after transitions from high to low light, thus enhancing photosystem II (PSII) quantum efficiency in fluctuating light. On transition from high to low light, slows down photoprotection by dissipating the pH gradient across the thylakoid membrane. During photosynthetic response on transition from dark to low light, involved in a sequential mechanism of adaptation; VCCN1 and CLCe first trigger the activation of photoprotection, which is later down-regulated by KEA3 to a low steady state, while adjusting electron transport. Together with the chloroplast NADH dehydrogenase-like (NDH) complex, maximizes photosynthesis efficiency after a long dark adaptation. Required in roots for rapid hyperosmotic-induced Ca(2+) responses and for osmo-sensory potentiation in hyperosmotic conditions. Functionally, low K(+)/H(+) efflux antiporter activity. Its function is as follows. Low K(+)/H(+) efflux antiporter activity. Promotes non-photochemical quenching (NPQ) in high light conditions. This chain is K(+) efflux antiporter 3, chloroplastic, found in Arabidopsis thaliana (Mouse-ear cress).